Reading from the N-terminus, the 734-residue chain is E3 ubiquitin-protein ligase TRIM56 (734 aa).

The segment at 21 to 60 (CKICLEQLHTPKTLPCLHTYCQDCLAQLDIGGQVRCPECR) adopts an RING-type zinc-finger fold. B box-type zinc fingers lie at residues 98 to 149 (KPTC…VVDL) and 164 to 205 (RQAS…CLPL). The Zn(2+) site is built by Cys169, His172, Cys192, and His197. Positions 215–303 (GLEELLAGVD…KIERQEQVAK (89 aa)) form a coiled coil. The span at 372–381 (EPKQSPKDSG) shows a compositional bias: basic and acidic residues. The interval 372-463 (EPKQSPKDSG…SPILRPNLEG (92 aa)) is disordered. The span at 435 to 448 (RPNKKKKCKGRGKS) shows a compositional bias: basic residues. A Phosphoserine modification is found at Ser454.

The protein belongs to the TRIM/RBCC family. Interacts with STING1. Interacts with TICAM1.

It localises to the cytoplasm. It catalyses the reaction S-ubiquitinyl-[E2 ubiquitin-conjugating enzyme]-L-cysteine + [acceptor protein]-L-lysine = [E2 ubiquitin-conjugating enzyme]-L-cysteine + N(6)-ubiquitinyl-[acceptor protein]-L-lysine.. The protein operates within protein modification; protein ubiquitination. In terms of biological role, E3 ubiquitin-protein ligase that plays a key role in innate antiviral immunity by mediating ubiquitination of CGAS and STING1. In response to pathogen- and host-derived double-stranded DNA (dsDNA), targets STING1 to 'Lys-63'-linked ubiquitination, thereby promoting its homodimerization, a step required for the production of type I interferon IFN-beta. Also mediates monoubiquitination of CGAS, thereby promoting CGAS oligomerization and subsequent activation. Independently of its E3 ubiquitin ligase activity, positive regulator of TLR3 signaling. Potentiates extracellular double stranded RNA (dsRNA)-induced expression of IFNB1 and interferon-stimulated genes ISG15, IFIT1/ISG56, CXCL10, OASL and CCL5/RANTES. This chain is E3 ubiquitin-protein ligase TRIM56, found in Mus musculus (Mouse).